The primary structure comprises 606 residues: Large subunit GTPase 1 homolog (606 aa).

The disordered stretch occupies residues methionine 1–phenylalanine 21. One can recognise a CP-type G domain in the interval tryptophan 165–proline 395. Position 213-216 (asparagine 213–aspartate 216) interacts with GTP. 2 positions are modified to phosphoserine: serine 276 and serine 279. Residues glycine 344–serine 351 and aspartate 388–glycine 391 contribute to the GTP site. The segment at leucine 574–histidine 606 is disordered. Positions proline 584–phenylalanine 600 are enriched in basic residues.

The protein belongs to the TRAFAC class YlqF/YawG GTPase family. LSG1 subfamily. As to expression, expressed in larval serotonergic neurons.

It is found in the cytoplasm. GTPase required for the nuclear export of the 60S ribosomal subunit. Probably acts by mediating the release of Nmd3 from the 60S ribosomal subunit after export into the cytoplasm. Regulator of body size; acts in serotonergic neurons to regulate insulin signaling and thus exerts global growth control. The sequence is that of Large subunit GTPase 1 homolog (Ns3) from Drosophila melanogaster (Fruit fly).